The primary structure comprises 644 residues: 3D-(3,5/4)-trihydroxycyclohexane-1,2-dione hydrolase (644 aa).

Position 65 (E65) interacts with thiamine diphosphate. The tract at residues 442-522 (SLPGDLQRMW…INVLLFDNSG (81 aa)) is thiamine pyrophosphate binding. Residues D493 and N520 each coordinate Mg(2+).

It belongs to the TPP enzyme family. Requires Mg(2+) as cofactor. The cofactor is thiamine diphosphate.

It carries out the reaction 3D-3,5/4-trihydroxycyclohexane-1,2-dione + H2O = 5-deoxy-D-glucuronate + H(+). The protein operates within polyol metabolism; myo-inositol degradation into acetyl-CoA; acetyl-CoA from myo-inositol: step 3/7. Involved in the cleavage of the C1-C2 bond of 3D-(3,5/4)-trihydroxycyclohexane-1,2-dione (THcHDO) to yield 5-deoxy-glucuronate (5DG). The sequence is that of 3D-(3,5/4)-trihydroxycyclohexane-1,2-dione hydrolase from Bacillus cereus (strain AH820).